The following is a 445-amino-acid chain: Chromosomal replication initiator protein DnaA (445 aa).

The domain I, interacts with DnaA modulators stretch occupies residues 1-73; that stretch reads MSTHLTETWE…VNALKLLTSK (73 aa). Positions 73 to 106 are domain II; that stretch reads KKYNIDFIVTTEEKIEKNHNNEKSNIVVNDEMST. The tract at residues 107–323 is domain III, AAA+ region; that stretch reads MLNPKYTFDS…GALIRIVAFS (217 aa). Positions 151, 153, 154, and 155 each coordinate ATP. A domain IV, binds dsDNA region spans residues 324-445; sequence SLTNKEISVD…NDLNKRINQK (122 aa).

Belongs to the DnaA family. As to quaternary structure, oligomerizes as a right-handed, spiral filament on DNA at oriC.

Its subcellular location is the cytoplasm. Its function is as follows. Plays an essential role in the initiation and regulation of chromosomal replication. ATP-DnaA binds to the origin of replication (oriC) to initiate formation of the DNA replication initiation complex once per cell cycle. Binds the DnaA box (a 9 base pair repeat at the origin) and separates the double-stranded (ds)DNA. Forms a right-handed helical filament on oriC DNA; dsDNA binds to the exterior of the filament while single-stranded (ss)DNA is stabiized in the filament's interior. The ATP-DnaA-oriC complex binds and stabilizes one strand of the AT-rich DNA unwinding element (DUE), permitting loading of DNA polymerase. After initiation quickly degrades to an ADP-DnaA complex that is not apt for DNA replication. Binds acidic phospholipids. The polypeptide is Chromosomal replication initiator protein DnaA (Clostridium botulinum (strain Loch Maree / Type A3)).